A 100-amino-acid chain; its full sequence is Large ribosomal subunit protein uL23 (100 aa).

Belongs to the universal ribosomal protein uL23 family. Part of the 50S ribosomal subunit. Contacts protein L29, and trigger factor when it is bound to the ribosome.

In terms of biological role, one of the early assembly proteins it binds 23S rRNA. One of the proteins that surrounds the polypeptide exit tunnel on the outside of the ribosome. Forms the main docking site for trigger factor binding to the ribosome. The sequence is that of Large ribosomal subunit protein uL23 from Pseudoalteromonas translucida (strain TAC 125).